We begin with the raw amino-acid sequence, 379 residues long: Chaperone protein DnaJ (379 aa).

The region spanning 5–70 is the J domain; sequence DYYEVLGLSK…EKKAMYDQYG (66 aa). Residues 136-214 form a CR-type zinc finger; that stretch reads GCKKDIRIHT…CHGDGRVHKA (79 aa). Cys-149, Cys-152, Cys-166, Cys-169, Cys-188, Cys-191, Cys-202, and Cys-205 together coordinate Zn(2+). 4 CXXCXGXG motif repeats span residues 149–156, 166–173, 188–195, and 202–209; these read CDTCHGTG, CSHCHGSG, CPSCHGTG, and CRSCHGDG.

Belongs to the DnaJ family. As to quaternary structure, homodimer. It depends on Zn(2+) as a cofactor.

It is found in the cytoplasm. Its function is as follows. Participates actively in the response to hyperosmotic and heat shock by preventing the aggregation of stress-denatured proteins and by disaggregating proteins, also in an autonomous, DnaK-independent fashion. Unfolded proteins bind initially to DnaJ; upon interaction with the DnaJ-bound protein, DnaK hydrolyzes its bound ATP, resulting in the formation of a stable complex. GrpE releases ADP from DnaK; ATP binding to DnaK triggers the release of the substrate protein, thus completing the reaction cycle. Several rounds of ATP-dependent interactions between DnaJ, DnaK and GrpE are required for fully efficient folding. Also involved, together with DnaK and GrpE, in the DNA replication of plasmids through activation of initiation proteins. This chain is Chaperone protein DnaJ, found in Mannheimia haemolytica (Pasteurella haemolytica).